The following is a 648-amino-acid chain: DNA gyrase subunit B (648 aa).

The Toprim domain maps to 432-546 (RELFIVEGNS…YGFVYLAQPP (115 aa)). Mg(2+) is bound by residues Glu-438, Asp-511, and Asp-513.

Belongs to the type II topoisomerase GyrB family. As to quaternary structure, heterotetramer, composed of two GyrA and two GyrB chains. In the heterotetramer, GyrA contains the active site tyrosine that forms a transient covalent intermediate with DNA, while GyrB binds cofactors and catalyzes ATP hydrolysis. The cofactor is Mg(2+). Requires Mn(2+) as cofactor. Ca(2+) is required as a cofactor.

Its subcellular location is the cytoplasm. It carries out the reaction ATP-dependent breakage, passage and rejoining of double-stranded DNA.. In terms of biological role, a type II topoisomerase that negatively supercoils closed circular double-stranded (ds) DNA in an ATP-dependent manner to modulate DNA topology and maintain chromosomes in an underwound state. Negative supercoiling favors strand separation, and DNA replication, transcription, recombination and repair, all of which involve strand separation. Also able to catalyze the interconversion of other topological isomers of dsDNA rings, including catenanes and knotted rings. Type II topoisomerases break and join 2 DNA strands simultaneously in an ATP-dependent manner. The polypeptide is DNA gyrase subunit B (Metamycoplasma hominis (strain ATCC 23114 / DSM 25592 / NBRC 14850 / NCTC 10111 / PG21) (Mycoplasma hominis)).